A 22-amino-acid chain; its full sequence is 2.4 kDa venom peptide (22 aa).

Contains 2 disulfide bonds. Expressed by the venom gland.

Its subcellular location is the secreted. Its function is as follows. Not lethal to mice by intraperitoneal or intracerebroventricular injections in doses up to 150 micrograms. The chain is 2.4 kDa venom peptide from Heterometrus spinifer (Asia giant forest scorpion).